A 206-amino-acid chain; its full sequence is Sclerostin domain-containing protein 1 (206 aa).

Positions 1–23 (MLPPAIHLSLIPLLCILMRNCLA) are cleaved as a signal peptide. Positions 42–62 (AHPSSNSTLNQARNGGRHFSS) are disordered. Positions 44 to 62 (PSSNSTLNQARNGGRHFSS) are enriched in polar residues. Residue Asn47 is glycosylated (N-linked (GlcNAc...) asparagine). 4 cysteine pairs are disulfide-bonded: Cys75-Cys133, Cys89-Cys147, Cys100-Cys163, and Cys104-Cys165. Residues 75–170 (CRELRSTKYI…TACKCKRYTR (96 aa)) enclose the CTCK domain. Asn173 carries N-linked (GlcNAc...) asparagine glycosylation. Positions 176 to 206 (SHNFESVSPAKPAQHHRERKRASKSSKHSLS) are disordered. Over residues 188 to 206 (AQHHRERKRASKSSKHSLS) the composition is skewed to basic residues.

The protein belongs to the sclerostin family. Interacts with BMP2, BMP4, BMP6 and BMP7 with high affinity. Highly expressed in kidney at renal collecting ducts level and weakly in brain.

The protein resides in the secreted. In terms of biological role, may be involved in the onset of endometrial receptivity for implantation/sensitization for the decidual cell reaction. Enhances Wnt signaling and inhibits TGF-beta signaling. Directly antagonizes activity of BMP2, BMP4, BMP6 and BMP7 in a dose-dependent manner. This is Sclerostin domain-containing protein 1 (Sostdc1) from Mus musculus (Mouse).